Here is a 206-residue protein sequence, read N- to C-terminus: MARGKFITFEGIDGAGKTTHLSWFRERLEQKVASTGRSVVMTREPGGTPLGEQIREIVLHQKMDLETEALLMFALRRQHLAEVIEPALARGDWVLSDRFTDATFAYQGGGRGLPRDKLETLERWVQGGFQPDLTVLFDLDPEVASERRSAARDPDRFESESEAFFSRTRAEYLRRAEEAPYRFAIIDSAQSIAQIQRRLEELIAIL.

11–18 (GIDGAGKT) serves as a coordination point for ATP.

The protein belongs to the thymidylate kinase family.

The catalysed reaction is dTMP + ATP = dTDP + ADP. Its function is as follows. Phosphorylation of dTMP to form dTDP in both de novo and salvage pathways of dTTP synthesis. This chain is Thymidylate kinase, found in Paraburkholderia xenovorans (strain LB400).